The primary structure comprises 185 residues: Ribosome-recycling factor (185 aa).

This sequence belongs to the RRF family.

It localises to the cytoplasm. Responsible for the release of ribosomes from messenger RNA at the termination of protein biosynthesis. May increase the efficiency of translation by recycling ribosomes from one round of translation to another. This is Ribosome-recycling factor from Bacillus cereus (strain B4264).